A 259-amino-acid polypeptide reads, in one-letter code: Hydroxyethylthiazole kinase (259 aa).

Methionine 38 is a binding site for substrate. Arginine 113 and serine 158 together coordinate ATP. Glycine 185 contacts substrate.

This sequence belongs to the Thz kinase family. It depends on Mg(2+) as a cofactor.

The catalysed reaction is 5-(2-hydroxyethyl)-4-methylthiazole + ATP = 4-methyl-5-(2-phosphooxyethyl)-thiazole + ADP + H(+). Its pathway is cofactor biosynthesis; thiamine diphosphate biosynthesis; 4-methyl-5-(2-phosphoethyl)-thiazole from 5-(2-hydroxyethyl)-4-methylthiazole: step 1/1. Functionally, catalyzes the phosphorylation of the hydroxyl group of 4-methyl-5-beta-hydroxyethylthiazole (THZ). This is Hydroxyethylthiazole kinase from Leuconostoc citreum (strain KM20).